A 494-amino-acid chain; its full sequence is Acetyl-coenzyme A carboxylase carboxyl transferase subunit beta, chloroplastic (494 aa).

The region spanning 226-494 is the CoA carboxyltransferase N-terminal domain; the sequence is LWVQCENCYG…VPLNQNETEH (269 aa). Zn(2+) contacts are provided by Cys230, Cys233, Cys249, and Cys252. A C4-type zinc finger spans residues 230–252; sequence CENCYGLNYKKFLKSKMNICEQC.

Belongs to the AccD/PCCB family. In terms of assembly, acetyl-CoA carboxylase is a heterohexamer composed of biotin carboxyl carrier protein, biotin carboxylase and 2 subunits each of ACCase subunit alpha and ACCase plastid-coded subunit beta (accD). Zn(2+) serves as cofactor.

The protein localises to the plastid. It localises to the chloroplast stroma. The catalysed reaction is N(6)-carboxybiotinyl-L-lysyl-[protein] + acetyl-CoA = N(6)-biotinyl-L-lysyl-[protein] + malonyl-CoA. Its pathway is lipid metabolism; malonyl-CoA biosynthesis; malonyl-CoA from acetyl-CoA: step 1/1. Functionally, component of the acetyl coenzyme A carboxylase (ACC) complex. Biotin carboxylase (BC) catalyzes the carboxylation of biotin on its carrier protein (BCCP) and then the CO(2) group is transferred by the transcarboxylase to acetyl-CoA to form malonyl-CoA. In Coffea arabica (Arabian coffee), this protein is Acetyl-coenzyme A carboxylase carboxyl transferase subunit beta, chloroplastic.